Reading from the N-terminus, the 364-residue chain is Aminomethyltransferase (364 aa).

Belongs to the GcvT family. In terms of assembly, the glycine cleavage system is composed of four proteins: P, T, L and H.

The enzyme catalyses N(6)-[(R)-S(8)-aminomethyldihydrolipoyl]-L-lysyl-[protein] + (6S)-5,6,7,8-tetrahydrofolate = N(6)-[(R)-dihydrolipoyl]-L-lysyl-[protein] + (6R)-5,10-methylene-5,6,7,8-tetrahydrofolate + NH4(+). Its function is as follows. The glycine cleavage system catalyzes the degradation of glycine. The polypeptide is Aminomethyltransferase (Geobacillus sp. (strain WCH70)).